A 318-amino-acid chain; its full sequence is MGSTSRVRGTGVNRHLLSTEDLDRDDALLVLDTAERMARVAEASVRKLPTLRGRTVVNLFFEDSTRTRTSFEVAAKRLSADVINFSARGSSVSKGESLKDTAQTLEAMGADAVVCRHAASGAPHRLASWVRGSVVNAGDGTHEHPTQALLDAFTMRRRLGRIDGLAVTIVGDVLHSRVARSNVWLLATLGATVTVVAPPTLVPLGISSWPVEVSYNLDAVLPKSDVVMMLRVQRERMSAAFFPTEREYSRRYGLDADRAEMLPDHALVMHPGPMVRGMEIASRVADSARSTVVEQVANGVSVRMAVLYLLLGGSGEVS.

Residues Arg66 and Thr67 each coordinate carbamoyl phosphate. Lys94 lines the L-aspartate pocket. Carbamoyl phosphate contacts are provided by Arg116, His144, and Gln147. Arg177 and Arg231 together coordinate L-aspartate. Carbamoyl phosphate-binding residues include Gly272 and Pro273.

Belongs to the aspartate/ornithine carbamoyltransferase superfamily. ATCase family. In terms of assembly, heterododecamer (2C3:3R2) of six catalytic PyrB chains organized as two trimers (C3), and six regulatory PyrI chains organized as three dimers (R2).

It catalyses the reaction carbamoyl phosphate + L-aspartate = N-carbamoyl-L-aspartate + phosphate + H(+). The protein operates within pyrimidine metabolism; UMP biosynthesis via de novo pathway; (S)-dihydroorotate from bicarbonate: step 2/3. Functionally, catalyzes the condensation of carbamoyl phosphate and aspartate to form carbamoyl aspartate and inorganic phosphate, the committed step in the de novo pyrimidine nucleotide biosynthesis pathway. This Frankia casuarinae (strain DSM 45818 / CECT 9043 / HFP020203 / CcI3) protein is Aspartate carbamoyltransferase catalytic subunit.